The sequence spans 597 residues: Putative lipase ATG15 (597 aa).

The Cytoplasmic portion of the chain corresponds to Met-1 to Trp-15. Residues Thr-16–Ile-36 traverse the membrane as a helical; Signal-anchor for type II membrane protein segment. Over Thr-37–Lys-597 the chain is Lumenal. N-linked (GlcNAc...) asparagine glycosylation is found at Asn-195, Asn-262, and Asn-346. Residue Ser-364 is the Charge relay system of the active site. Residue Asn-481 is glycosylated (N-linked (GlcNAc...) asparagine). Residues Glu-507–Cys-570 are disordered. Positions Ser-519 to Ser-554 are enriched in low complexity.

The protein belongs to the AB hydrolase superfamily. Lipase family. In terms of assembly, binds to both phosphatidylinositol (PI) and phosphatidylinositol 3,5-bisphosphate (PIP2).

The protein resides in the endosome. It localises to the multivesicular body membrane. Its subcellular location is the prevacuolar compartment membrane. It catalyses the reaction a triacylglycerol + H2O = a diacylglycerol + a fatty acid + H(+). In terms of biological role, lipase which is essential for lysis of subvacuolar cytoplasm to vacuole targeted bodies and intravacuolar autophagic bodies. Involved in the lysis of intravacuolar multivesicular body (MVB) vesicles. The intravacuolar membrane disintegration by ATG15 is critical to life span extension. In Candida albicans (strain SC5314 / ATCC MYA-2876) (Yeast), this protein is Putative lipase ATG15 (ATG15).